The primary structure comprises 681 residues: MNDIKNIRNIGIIAHVDAGKTTTTERILFFSGFSHKIGEVHTGNTITDWMKQEQERGITITSASVTFFWKTNFYNSSINLIDTPGHVDFTIEVERSLRVLDGAVILICASSGIQPQTETVWNQSEKFNIPKILFVNKLDRIGAKYLSIIENIKKKFFCNILIINLNIGIENSFSGIIDLINMKELIWNNSQLEIRNITNKNFDISNKYRNILLETLSEYDDIFLEKYINSNFSIKDIIESIRKLVILNKIIPIACGSSLKNKGIEFLLDSIVNFLPSPIDIGIKNVSNINYSVNIKSKFLALLFKVFNDPYLGLLSFIRIYSGKIEPGQIIFNNSKNIKEKIFRIIRMFANSKKDLNIASAGDIVVLIGLKNSFTGDTLSFDNEKVLLEKINIPLPVISVSVEPIVKNDYEKLLNLINKFCKEDPSLLFKINENTGELILSGMGELHLEIIIDRINNEFNIKTKTSKPQVSYKESIKKTIIQEGKYIKQTGGRGQYGHVVLKIEPILIEKDDFIFKIEVVGGVIPKEYFLSIEKGILEQIKCGVVLGYPVTKIKITLINGSFHPVDSSEYAFKNAASIALKEALKKANSFLLEPIMKVEIISPKEYLGIVISDISKKRGNIISVVDNNNNLKIINSLIPLRELFGYSTDLRSNTKGRANYNMEFHNYSETPNYILEKIKKK.

One can recognise a tr-type G domain in the interval 5–279 (KNIRNIGIIA…SIVNFLPSPI (275 aa)). GTP-binding positions include 14-21 (AHVDAGKT), 82-86 (DTPGH), and 136-139 (NKLD).

Belongs to the TRAFAC class translation factor GTPase superfamily. Classic translation factor GTPase family. EF-G/EF-2 subfamily.

It is found in the cytoplasm. Catalyzes the GTP-dependent ribosomal translocation step during translation elongation. During this step, the ribosome changes from the pre-translocational (PRE) to the post-translocational (POST) state as the newly formed A-site-bound peptidyl-tRNA and P-site-bound deacylated tRNA move to the P and E sites, respectively. Catalyzes the coordinated movement of the two tRNA molecules, the mRNA and conformational changes in the ribosome. The sequence is that of Elongation factor G from Carsonella ruddii (strain PV).